The sequence spans 578 residues: Proline--tRNA ligase (578 aa).

Belongs to the class-II aminoacyl-tRNA synthetase family. ProS type 1 subfamily. As to quaternary structure, homodimer.

It localises to the cytoplasm. The enzyme catalyses tRNA(Pro) + L-proline + ATP = L-prolyl-tRNA(Pro) + AMP + diphosphate. Functionally, catalyzes the attachment of proline to tRNA(Pro) in a two-step reaction: proline is first activated by ATP to form Pro-AMP and then transferred to the acceptor end of tRNA(Pro). As ProRS can inadvertently accommodate and process non-cognate amino acids such as alanine and cysteine, to avoid such errors it has two additional distinct editing activities against alanine. One activity is designated as 'pretransfer' editing and involves the tRNA(Pro)-independent hydrolysis of activated Ala-AMP. The other activity is designated 'posttransfer' editing and involves deacylation of mischarged Ala-tRNA(Pro). The misacylated Cys-tRNA(Pro) is not edited by ProRS. The chain is Proline--tRNA ligase from Paraburkholderia xenovorans (strain LB400).